Reading from the N-terminus, the 239-residue chain is UPF0502 protein Bcen_5249 (239 aa).

Residues 196–239 (IRGAKGRTEAPRGRSGATQCAGSTDGERTRHRRRRTGRRVLIAS) are disordered. Residues 224-233 (TRHRRRRTGR) show a composition bias toward basic residues.

This sequence belongs to the UPF0502 family.

This Burkholderia orbicola (strain AU 1054) protein is UPF0502 protein Bcen_5249.